A 412-amino-acid chain; its full sequence is Phosphoglycerate kinase (412 aa).

The (2R)-3-phosphoglycerate site is built by valine 20, aspartate 21, phenylalanine 22, asparagine 23, glutamine 35, arginine 36, serine 59, histidine 60, glycine 62, arginine 63, leucine 118, arginine 119, histidine 166, and arginine 167. Residue glycine 210 participates in ADP binding. Glycine 210 is a CDP binding site. Positions 211 and 212 each coordinate AMP. Alanine 211 contacts ATP. Alanine 211 is a binding site for Mg(2+). Residues alanine 214 and aspartate 215 each coordinate Mg(2+). Aspartate 215 contributes to the CDP binding site. Lysine 216 provides a ligand contact to AMP. Lysine 216 serves as a coordination point for ATP. Glycine 234 is a binding site for ADP. CDP is bound at residue glycine 234. AMP is bound by residues glycine 235 and glycine 308. 2 residues coordinate ATP: glycine 235 and glycine 308. Residues glycine 333 and phenylalanine 338 each coordinate CDP. Phenylalanine 338 serves as a coordination point for ADP. Glutamate 339 serves as a coordination point for AMP. ATP-binding residues include glutamate 339, aspartate 370, and threonine 371. Aspartate 370 lines the Mg(2+) pocket.

The protein belongs to the phosphoglycerate kinase family. As to quaternary structure, monomer. Requires Mg(2+) as cofactor.

The protein resides in the cytoplasm. The catalysed reaction is (2R)-3-phosphoglycerate + ATP = (2R)-3-phospho-glyceroyl phosphate + ADP. It functions in the pathway carbohydrate degradation; glycolysis; pyruvate from D-glyceraldehyde 3-phosphate: step 2/5. Functionally, catalyzes one of the two ATP producing reactions in the glycolytic pathway via the reversible conversion of 1,3-diphosphoglycerate to 3-phosphoglycerate. In addition to its role as a glycolytic enzyme, it seems that PGK-1 acts as a polymerase alpha cofactor protein (primer recognition protein). May play a role in sperm motility. This chain is Phosphoglycerate kinase (PGK), found in Aplysia californica (California sea hare).